The sequence spans 351 residues: MKNKKRVLIASSLSCAILLLSAATTQANSAHKDSQDQNKKEHVDKSQQKDKRNVTNKDKNSTVPDDIGKNGKITKRTETVYDEKTNILQNLQFDFIDDPTYDKNVLLVKKQGSIHSNLKFESHKEEKNSNWLKYPSEYHVDFQVKRNRKTEILDQLPKNKISTAKVDSTFSYSSGGKFDSTKGIGRTSSNSYSKTISYNQQNYDTIASGKNNNWHVHWSVIANDLKYGGEVKNRNDELLFYRNTRIATVENPELSFASKYRYPALVRSGFNPEFLTYLSNEKSNEKTQFEVTYTRNQDILKNRPGIHYAPPILEKNKDGQRLIVTYEVDWKNKTVKVVDKYSDDNKPYKEG.

Positions 1 to 27 are cleaved as a signal peptide; sequence MKNKKRVLIASSLSCAILLLSAATTQA. The disordered stretch occupies residues 28–71; sequence NSAHKDSQDQNKKEHVDKSQQKDKRNVTNKDKNSTVPDDIGKNG. Residues 30–60 are compositionally biased toward basic and acidic residues; sequence AHKDSQDQNKKEHVDKSQQKDKRNVTNKDKN.

The protein belongs to the aerolysin family.

This is an uncharacterized protein from Staphylococcus aureus (strain N315).